The chain runs to 364 residues: UDP-N-acetylglucosamine--N-acetylmuramyl-(pentapeptide) pyrophosphoryl-undecaprenol N-acetylglucosamine transferase (364 aa).

UDP-N-acetyl-alpha-D-glucosamine-binding positions include 10–12, Asn-124, Ser-195, Ile-250, and Gln-295; that span reads TGG.

The protein belongs to the glycosyltransferase 28 family. MurG subfamily.

Its subcellular location is the cell membrane. It carries out the reaction di-trans,octa-cis-undecaprenyl diphospho-N-acetyl-alpha-D-muramoyl-L-alanyl-D-glutamyl-meso-2,6-diaminopimeloyl-D-alanyl-D-alanine + UDP-N-acetyl-alpha-D-glucosamine = di-trans,octa-cis-undecaprenyl diphospho-[N-acetyl-alpha-D-glucosaminyl-(1-&gt;4)]-N-acetyl-alpha-D-muramoyl-L-alanyl-D-glutamyl-meso-2,6-diaminopimeloyl-D-alanyl-D-alanine + UDP + H(+). It functions in the pathway cell wall biogenesis; peptidoglycan biosynthesis. Its function is as follows. Cell wall formation. Catalyzes the transfer of a GlcNAc subunit on undecaprenyl-pyrophosphoryl-MurNAc-pentapeptide (lipid intermediate I) to form undecaprenyl-pyrophosphoryl-MurNAc-(pentapeptide)GlcNAc (lipid intermediate II). In Bacillus cytotoxicus (strain DSM 22905 / CIP 110041 / 391-98 / NVH 391-98), this protein is UDP-N-acetylglucosamine--N-acetylmuramyl-(pentapeptide) pyrophosphoryl-undecaprenol N-acetylglucosamine transferase.